We begin with the raw amino-acid sequence, 117 residues long: G antigen 12I (117 aa).

The disordered stretch occupies residues 1 to 117; that stretch reads MSWRGRSTYY…PEEGEKQSQC (117 aa). 2 stretches are compositionally biased toward acidic residues: residues 32-45 and 87-96; these read FSDEVEPATPEEGE and ECEDGPDGQE. Positions 103 to 117 are enriched in basic and acidic residues; sequence EEVKTPEEGEKQSQC.

The protein belongs to the GAGE family. As to quaternary structure, forms tetramers.

The protein is G antigen 12I (GAGE12I) of Homo sapiens (Human).